The chain runs to 236 residues: (5-formylfuran-3-yl)methyl phosphate synthase (236 aa).

K27 functions as the Schiff-base intermediate with substrate in the catalytic mechanism. Residue K85 is the Proton acceptor of the active site.

It belongs to the MfnB family.

The catalysed reaction is 2 D-glyceraldehyde 3-phosphate = 4-(hydroxymethyl)-2-furancarboxaldehyde phosphate + phosphate + 2 H2O. It functions in the pathway cofactor biosynthesis; methanofuran biosynthesis. Functionally, catalyzes the formation of 4-(hydroxymethyl)-2-furancarboxaldehyde phosphate (4-HFC-P) from two molecules of glyceraldehyde-3-P (GA-3-P). This is (5-formylfuran-3-yl)methyl phosphate synthase from Methanococcus maripaludis (strain DSM 14266 / JCM 13030 / NBRC 101832 / S2 / LL).